A 232-amino-acid polypeptide reads, in one-letter code: Large ribosomal subunit protein uL1 (232 aa).

It belongs to the universal ribosomal protein uL1 family. Part of the 50S ribosomal subunit.

Its function is as follows. Binds directly to 23S rRNA. The L1 stalk is quite mobile in the ribosome, and is involved in E site tRNA release. In terms of biological role, protein L1 is also a translational repressor protein, it controls the translation of the L11 operon by binding to its mRNA. The chain is Large ribosomal subunit protein uL1 from Bordetella petrii (strain ATCC BAA-461 / DSM 12804 / CCUG 43448).